The sequence spans 266 residues: Methionine aminopeptidase 1 (266 aa).

Histidine 88 is a binding site for substrate. The a divalent metal cation site is built by aspartate 106, aspartate 117, and histidine 186. Histidine 193 serves as a coordination point for substrate. Residues glutamate 219 and glutamate 250 each coordinate a divalent metal cation.

This sequence belongs to the peptidase M24A family. Methionine aminopeptidase type 1 subfamily. Monomer. Co(2+) is required as a cofactor. The cofactor is Zn(2+). It depends on Mn(2+) as a cofactor. Requires Fe(2+) as cofactor.

It carries out the reaction Release of N-terminal amino acids, preferentially methionine, from peptides and arylamides.. Functionally, removes the N-terminal methionine from nascent proteins. The N-terminal methionine is often cleaved when the second residue in the primary sequence is small and uncharged (Met-Ala-, Cys, Gly, Pro, Ser, Thr, or Val). Requires deformylation of the N(alpha)-formylated initiator methionine before it can be hydrolyzed. The polypeptide is Methionine aminopeptidase 1 (Mycobacterium tuberculosis (strain CDC 1551 / Oshkosh)).